The sequence spans 219 residues: Ribose-5-phosphate isomerase A (219 aa).

Residues Thr-28–Thr-31, Asp-81–Asp-84, and Lys-94–Gly-97 contribute to the substrate site. The active-site Proton acceptor is Glu-103. Position 121 (Lys-121) interacts with substrate.

The protein belongs to the ribose 5-phosphate isomerase family. In terms of assembly, homodimer.

The catalysed reaction is aldehydo-D-ribose 5-phosphate = D-ribulose 5-phosphate. It participates in carbohydrate degradation; pentose phosphate pathway; D-ribose 5-phosphate from D-ribulose 5-phosphate (non-oxidative stage): step 1/1. Functionally, catalyzes the reversible conversion of ribose-5-phosphate to ribulose 5-phosphate. This Nitrosomonas europaea (strain ATCC 19718 / CIP 103999 / KCTC 2705 / NBRC 14298) protein is Ribose-5-phosphate isomerase A.